Reading from the N-terminus, the 102-residue chain is Phosphoribosyl-ATP pyrophosphatase (102 aa).

Belongs to the PRA-PH family.

The protein resides in the cytoplasm. It carries out the reaction 1-(5-phospho-beta-D-ribosyl)-ATP + H2O = 1-(5-phospho-beta-D-ribosyl)-5'-AMP + diphosphate + H(+). It functions in the pathway amino-acid biosynthesis; L-histidine biosynthesis; L-histidine from 5-phospho-alpha-D-ribose 1-diphosphate: step 2/9. The sequence is that of Phosphoribosyl-ATP pyrophosphatase from Ignicoccus hospitalis (strain KIN4/I / DSM 18386 / JCM 14125).